Consider the following 86-residue polypeptide: Cell division topological specificity factor (86 aa).

This sequence belongs to the MinE family.

Its function is as follows. Prevents the cell division inhibition by proteins MinC and MinD at internal division sites while permitting inhibition at polar sites. This ensures cell division at the proper site by restricting the formation of a division septum at the midpoint of the long axis of the cell. This Azoarcus sp. (strain BH72) protein is Cell division topological specificity factor.